The following is a 248-amino-acid chain: Anamorsin homolog (248 aa).

An N-terminal SAM-like domain region spans residues F4–F129. The tract at residues A130–K161 is linker. Residues C172, C181, C184, and C186 each coordinate [2Fe-2S] cluster. Residues C172–C186 form a fe-S binding site A region. The [4Fe-4S] cluster site is built by C209, C212, C220, and C223. Short sequence motifs (cx2C motif) lie at residues C209 to C212 and C220 to C223. Residues C209–C223 are fe-S binding site B.

Belongs to the anamorsin family. In terms of assembly, monomer. [2Fe-2S] cluster is required as a cofactor. The cofactor is [4Fe-4S] cluster.

Its subcellular location is the cytoplasm. It is found in the mitochondrion intermembrane space. Functionally, component of the cytosolic iron-sulfur (Fe-S) protein assembly (CIA) machinery. Required for the maturation of extramitochondrial Fe-S proteins. Part of an electron transfer chain functioning in an early step of cytosolic Fe-S biogenesis, facilitating the de novo assembly of a [4Fe-4S] cluster on the cytosolic Fe-S scaffold complex. Electrons are transferred from NADPH via a FAD- and FMN-containing diflavin oxidoreductase. Together with the diflavin oxidoreductase, also required for the assembly of the diferric tyrosyl radical cofactor of ribonucleotide reductase (RNR), probably by providing electrons for reduction during radical cofactor maturation in the catalytic small subunit. The chain is Anamorsin homolog from Drosophila ananassae (Fruit fly).